The following is a 140-amino-acid chain: Protein E6 (140 aa).

Zinc fingers lie at residues 28–64 (CNFCKRFLSYTELTDFDTKCLSLIWKDDFVFACCRYC) and 101–137 (CHHCLKLLNQIEKLDICGRSELFHKVRRGWKGLCRQC).

The protein belongs to the papillomaviridae E6 protein family. In terms of assembly, forms homodimers. Interacts with ubiquitin-protein ligase UBE3A/E6-AP; this interaction stimulates UBE3A ubiquitin activity. Interacts with host BAK1.

It localises to the host cytoplasm. The protein resides in the host nucleus. Its function is as follows. Plays a major role in the induction and maintenance of cellular transformation. E6 associates with host UBE3A/E6-AP ubiquitin-protein ligase and modulates its activity. Protects host keratinocytes from apoptosis by mediating the degradation of host BAK1. May also inhibit host immune response. In Human papillomavirus 24, this protein is Protein E6.